A 106-amino-acid polypeptide reads, in one-letter code: MIITTTPTIDGHQITEYKGLVFGEVVSGANFIRDFFASITDVIGGRSGAYESKLNSARQEALAELEKEAKRVGANAVVGVSMEYQSMGGDKGMFIVVATGTAVVIR.

Belongs to the UPF0145 family.

The protein is UPF0145 protein APL_0465 of Actinobacillus pleuropneumoniae serotype 5b (strain L20).